We begin with the raw amino-acid sequence, 449 residues long: Probable pectate lyase P59 (449 aa).

An N-terminal signal peptide occupies residues 1 to 22 (MGGPKIKYSFLFLCITFATIIP). N56, N80, and N81 each carry an N-linked (GlcNAc...) asparagine glycan. 3 residues coordinate Ca(2+): D245, D269, and D273. The active site involves R325.

The protein belongs to the polysaccharide lyase 1 family. It depends on Ca(2+) as a cofactor. In terms of tissue distribution, expressed in anthers and pollen.

The catalysed reaction is Eliminative cleavage of (1-&gt;4)-alpha-D-galacturonan to give oligosaccharides with 4-deoxy-alpha-D-galact-4-enuronosyl groups at their non-reducing ends.. Its pathway is glycan metabolism; pectin degradation; 2-dehydro-3-deoxy-D-gluconate from pectin: step 2/5. In terms of biological role, might be needed during pollen development and tube growth. The protein is Probable pectate lyase P59 (LAT59) of Solanum lycopersicum (Tomato).